Here is a 509-residue protein sequence, read N- to C-terminus: 5-OH-xanthotoxin synthase (509 aa).

A helical membrane pass occupies residues 5–25 (AVVILLILAFPIASVYVLFYH). The substrate specificity stretch occupies residues 368–373 (TGALLI). Cys-449 serves as a coordination point for heme.

It belongs to the cytochrome P450 family. Requires heme as cofactor.

The protein resides in the microsome membrane. The enzyme catalyses xanthotoxin + reduced [NADPH--hemoprotein reductase] + O2 = 5-hydroxyxanthotoxin + oxidized [NADPH--hemoprotein reductase] + H2O + 2 H(+). Its pathway is secondary metabolite biosynthesis. In terms of biological role, involved in the biosynthesis of coumarins and furanocoumarins (FCs), natural products required for defense responses against attacks by predators with potential medical and agroindustrial usages such as anticoagulant, rodenticide and artificial vanilla substitutes. Catalyzes the conversion of xanthotoxin into 5-hydroxyxanthotoxin. This Ammi majus (Bishop's weed) protein is 5-OH-xanthotoxin synthase.